Reading from the N-terminus, the 135-residue chain is Large ribosomal subunit protein uL18 (135 aa).

The segment at 1-23 (MSQTANQKAKRIPLGKDASTKRR) is disordered.

This sequence belongs to the universal ribosomal protein uL18 family. Part of the 50S ribosomal subunit; part of the 5S rRNA/L5/L18/L25 subcomplex. Contacts the 5S and 23S rRNAs.

Its function is as follows. This is one of the proteins that bind and probably mediate the attachment of the 5S RNA into the large ribosomal subunit, where it forms part of the central protuberance. This Rhodococcus jostii (strain RHA1) protein is Large ribosomal subunit protein uL18.